A 122-amino-acid chain; its full sequence is Large ribosomal subunit protein uL14 (122 aa).

Belongs to the universal ribosomal protein uL14 family. In terms of assembly, part of the 50S ribosomal subunit. Forms a cluster with proteins L3 and L19. In the 70S ribosome, L14 and L19 interact and together make contacts with the 16S rRNA in bridges B5 and B8.

Functionally, binds to 23S rRNA. Forms part of two intersubunit bridges in the 70S ribosome. The polypeptide is Large ribosomal subunit protein uL14 (Bartonella bacilliformis (strain ATCC 35685 / KC583 / Herrer 020/F12,63)).